Reading from the N-terminus, the 408-residue chain is LL-diaminopimelate aminotransferase (408 aa).

Residues Y15 and G42 each coordinate substrate. Residues Y72, 108–109, Y132, N187, Y218, and 246–248 each bind pyridoxal 5'-phosphate; these read SK and SFS. Residues K109, Y132, and N187 each contribute to the substrate site. Residue K249 is modified to N6-(pyridoxal phosphate)lysine. Pyridoxal 5'-phosphate is bound by residues R257 and N292. N292 and R388 together coordinate substrate.

It belongs to the class-I pyridoxal-phosphate-dependent aminotransferase family. LL-diaminopimelate aminotransferase subfamily. Homodimer. It depends on pyridoxal 5'-phosphate as a cofactor.

The catalysed reaction is (2S,6S)-2,6-diaminopimelate + 2-oxoglutarate = (S)-2,3,4,5-tetrahydrodipicolinate + L-glutamate + H2O + H(+). Its pathway is amino-acid biosynthesis; L-lysine biosynthesis via DAP pathway; LL-2,6-diaminopimelate from (S)-tetrahydrodipicolinate (aminotransferase route): step 1/1. Its function is as follows. Involved in the synthesis of meso-diaminopimelate (m-DAP or DL-DAP), required for both lysine and peptidoglycan biosynthesis. Catalyzes the direct conversion of tetrahydrodipicolinate to LL-diaminopimelate. The protein is LL-diaminopimelate aminotransferase of Leptospira biflexa serovar Patoc (strain Patoc 1 / Ames).